Reading from the N-terminus, the 269-residue chain is MERYETLFAQLKNRQEGAFVPFVTLGDPGPEQSLKIIDALIEGGADALELGIPFSDPLADGPTIQGAALRAFAAGVTPAQCFEMLAAIRQKHPTIPIGLLMYANLVFSPGIDAFYAQCARVGVDSVLVADVPVEESAPFRQAAMRHNIAPIFICPPNADDDLLRQIASYGRGYTYLLSRAGVTGAENRAALPLHHLVEKLAEYHAAPPLQGFGISAPEQVSAAIDAGAAGAISGSAIVKIIERHLDEPQTMLDELKAFVQSLKAATKTA.

Catalysis depends on proton acceptor residues E49 and D60.

This sequence belongs to the TrpA family. As to quaternary structure, tetramer of two alpha and two beta chains.

The enzyme catalyses (1S,2R)-1-C-(indol-3-yl)glycerol 3-phosphate + L-serine = D-glyceraldehyde 3-phosphate + L-tryptophan + H2O. The protein operates within amino-acid biosynthesis; L-tryptophan biosynthesis; L-tryptophan from chorismate: step 5/5. Its function is as follows. The alpha subunit is responsible for the aldol cleavage of indoleglycerol phosphate to indole and glyceraldehyde 3-phosphate. In Klebsiella aerogenes (Enterobacter aerogenes), this protein is Tryptophan synthase alpha chain.